The following is a 274-amino-acid chain: Large ribosomal subunit protein uL2 (274 aa).

2 disordered regions span residues 28–55 and 224–274; these read APHA…RHVG and VAMN…RRRK.

It belongs to the universal ribosomal protein uL2 family. As to quaternary structure, part of the 50S ribosomal subunit. Forms a bridge to the 30S subunit in the 70S ribosome.

Functionally, one of the primary rRNA binding proteins. Required for association of the 30S and 50S subunits to form the 70S ribosome, for tRNA binding and peptide bond formation. It has been suggested to have peptidyltransferase activity; this is somewhat controversial. Makes several contacts with the 16S rRNA in the 70S ribosome. The chain is Large ribosomal subunit protein uL2 from Pseudomonas putida (strain W619).